A 228-amino-acid polypeptide reads, in one-letter code: MADDFGFFSSSESGAPEAAEEDPAAAFLAQQESEIAGIENDEGFGAPAGSQGGLAQPGPASGASEDMGATVNGDVFQEANGPADGYAAIAQADRLTQEPESIRKWREEQRKRLQELDAASKVMEQEWREKAKKDLEEWNQRQSEQVEKNKINNRIADKAFYQQPDADIIGYVASEEAFVKESKEETPGTEWEKVAQLCDFNPKSSKQCKDVSRLRSVLMSLKQTPLSR.

Met-1 is subject to Blocked amino end (Met). Residues 1–17 (MADDFGFFSSSESGAPE) are compositionally biased toward low complexity. Residues 1–80 (MADDFGFFSS…VNGDVFQEAN (80 aa)) form a disordered region. Phosphoserine is present on residues Ser-11 and Ser-13. Residues 92 to 154 (ADRLTQEPES…QVEKNKINNR (63 aa)) form an involved in binding clathrin heavy chain region. At Thr-186 the chain carries Phosphothreonine. Cys-198 and Cys-208 form a disulfide bridge. Lys-203 bears the N6-acetyllysine mark. At Ser-216 the chain carries Phosphoserine.

This sequence belongs to the clathrin light chain family. As to quaternary structure, clathrin coats are formed from molecules containing 3 heavy chains and 3 light chains. Interacts (via N-terminus) with HIP1. Interacts with HIP1R.

It is found in the cytoplasmic vesicle membrane. The protein localises to the membrane. It localises to the coated pit. In terms of biological role, clathrin is the major protein of the polyhedral coat of coated pits and vesicles. The protein is Clathrin light chain B (CLTB) of Bos taurus (Bovine).